The following is a 374-amino-acid chain: Protein RecA (374 aa).

66–73 is an ATP binding site; sequence GPESSGKT. A disordered region spans residues 326-374; it reads KLGVGVHPEESATEPGADAASAAPADAAPAVPAPTTAKATKSKATAAKS. A compositionally biased stretch (low complexity) spans 338-374; the sequence is TEPGADAASAAPADAAPAVPAPTTAKATKSKATAAKS.

It belongs to the RecA family.

The protein resides in the cytoplasm. Functionally, can catalyze the hydrolysis of ATP in the presence of single-stranded DNA, the ATP-dependent uptake of single-stranded DNA by duplex DNA, and the ATP-dependent hybridization of homologous single-stranded DNAs. It interacts with LexA causing its activation and leading to its autocatalytic cleavage. This chain is Protein RecA, found in Streptomyces coelicolor (strain ATCC BAA-471 / A3(2) / M145).